Consider the following 169-residue polypeptide: Peptide deformylase (169 aa).

Fe cation contacts are provided by cysteine 93 and histidine 135. Glutamate 136 is a catalytic residue. Histidine 139 serves as a coordination point for Fe cation.

This sequence belongs to the polypeptide deformylase family. The cofactor is Fe(2+).

It carries out the reaction N-terminal N-formyl-L-methionyl-[peptide] + H2O = N-terminal L-methionyl-[peptide] + formate. Removes the formyl group from the N-terminal Met of newly synthesized proteins. Requires at least a dipeptide for an efficient rate of reaction. N-terminal L-methionine is a prerequisite for activity but the enzyme has broad specificity at other positions. The sequence is that of Peptide deformylase from Aquifex aeolicus (strain VF5).